A 157-amino-acid chain; its full sequence is Baculoviral IAP repeat-containing protein 5.2-A (157 aa).

A BIR repeat occupies 31-101 (RLRTFSNWPF…KHSPSCLFIA (71 aa)). T47 is subject to Phosphothreonine; by CDK1. Zn(2+) is bound by residues C70, C73, H90, and C97.

Belongs to the IAP family. Component of the CPC at least composed of survivin/birc5, incenp, cdca8/borealin and/or cdca9/dasra-A, and aurkb/aurora-B. Interacts directly with incenp (via N-terminus). Interacts with rxra; the interaction is stronger in the absence of 9-cis retinoic acids. Post-translationally, ubiquitination is required for centrosome-targeting. In terms of tissue distribution, highly expressed in vascular endothelial cells of tadpoles.

The protein resides in the cytoplasm. The protein localises to the nucleus. It is found in the chromosome. It localises to the centromere. Its subcellular location is the cytoskeleton. The protein resides in the spindle. Its function is as follows. Component of the chromosomal passenger complex (CPC), a complex that acts as a key regulator of mitosis. The CPC complex has essential functions at the centromere in ensuring correct chromosome alignment and segregation and is required for chromatin-induced microtubule stabilization and spindle assembly. Does not appear to exhibit anti-apoptotic activity. Plays a role in increasing blood vessel size during development. This Xenopus laevis (African clawed frog) protein is Baculoviral IAP repeat-containing protein 5.2-A (birc5.2-a).